The following is a 303-amino-acid chain: N-acetyl-D-glucosamine kinase (303 aa).

Residues 4–11 (GFDIGGTK) and 133–140 (GVGGGLIF) contribute to the ATP site. Residues His157, Cys177, Cys179, and Cys184 each contribute to the Zn(2+) site.

This sequence belongs to the ROK (NagC/XylR) family. NagK subfamily.

The enzyme catalyses N-acetyl-D-glucosamine + ATP = N-acetyl-D-glucosamine 6-phosphate + ADP + H(+). Its pathway is cell wall biogenesis; peptidoglycan recycling. Functionally, catalyzes the phosphorylation of N-acetyl-D-glucosamine (GlcNAc) derived from cell-wall degradation, yielding GlcNAc-6-P. This Escherichia coli (strain K12 / DH10B) protein is N-acetyl-D-glucosamine kinase.